The primary structure comprises 619 residues: ETS-related transcription factor Elf-1 (619 aa).

A phosphoserine mark is found at Ser110, Ser163, Ser167, and Ser168. The tract at residues 158–199 is disordered; the sequence is EKYADSPGASSPEQPKRKKGRKTKPPRPDSPATTPNISVKKK. The segment covering 173-182 has biased composition (basic residues); the sequence is KRKKGRKTKP. Ser187 carries the phosphoserine modification. Residue Thr190 is modified to Phosphothreonine. The ETS DNA-binding region spans 208–290; sequence IYLWEFLLAL…EGQRLVYQFK (83 aa). The tract at residues 300–366 is disordered; the sequence is NDEDPSSSIE…DPVEVAQPSE (67 aa). Low complexity predominate over residues 305–321; that stretch reads SSSIESSDPSLSSSATS. Polar residues predominate over residues 322–335; it reads NRNQTSRSRVSSSP. Ser432 bears the Phosphoserine mark. The interval 564-592 is disordered; sequence TLTQEVEKKESEDHLKENTEKTEQQPQPY. Over residues 568–586 the composition is skewed to basic and acidic residues; sequence EVEKKESEDHLKENTEKTE.

The protein belongs to the ETS family. As to quaternary structure, binds to the underphosphorylated form of RB. May interact with other transcription factors in order to regulate specific genes. Interacts with RUNX1. As to expression, in fetal tissues, it is highly expressed in heart, lung liver and kidney, and weakly expressed in brain. In adult, it is highly expressed in pancreas, spleen, thymus and peripheral blood leukocytes, expressed at moderate levels in heart, placenta, lung, liver, skeletal muscle, kidney, prostate, ovary, small intestine and colon, and weakly expressed in brain and testis.

It is found in the nucleus. In terms of biological role, transcription factor that activates the LYN and BLK promoters. Appears to be required for the T-cell-receptor-mediated trans activation of HIV-2 gene expression. Binds specifically to two purine-rich motifs in the HIV-2 enhancer. The polypeptide is ETS-related transcription factor Elf-1 (ELF1) (Homo sapiens (Human)).